The primary structure comprises 119 residues: Ribonuclease P protein component (119 aa).

It belongs to the RnpA family. In terms of assembly, consists of a catalytic RNA component (M1 or rnpB) and a protein subunit.

The catalysed reaction is Endonucleolytic cleavage of RNA, removing 5'-extranucleotides from tRNA precursor.. In terms of biological role, RNaseP catalyzes the removal of the 5'-leader sequence from pre-tRNA to produce the mature 5'-terminus. It can also cleave other RNA substrates such as 4.5S RNA. The protein component plays an auxiliary but essential role in vivo by binding to the 5'-leader sequence and broadening the substrate specificity of the ribozyme. This is Ribonuclease P protein component from Yersinia pseudotuberculosis serotype O:1b (strain IP 31758).